The primary structure comprises 470 residues: Pyruvate kinase I (470 aa).

A substrate-binding site is contributed by Arg32. Asn34, Ser36, Asp66, and Thr67 together coordinate K(+). 34-37 (NFSH) is a binding site for ATP. Position 73 (Arg73) interacts with ATP. At Lys76 the chain carries N6-acetyllysine. Lys156 serves as a coordination point for ATP. Position 222 (Glu222) interacts with Mg(2+). The substrate site is built by Gly245, Asp246, and Thr278. Asp246 is a Mg(2+) binding site. Lys319 bears the N6-acetyllysine mark.

The protein belongs to the pyruvate kinase family. In terms of assembly, homotetramer. Requires Mg(2+) as cofactor. It depends on K(+) as a cofactor.

The enzyme catalyses pyruvate + ATP = phosphoenolpyruvate + ADP + H(+). It participates in carbohydrate degradation; glycolysis; pyruvate from D-glyceraldehyde 3-phosphate: step 5/5. The chain is Pyruvate kinase I (pykF) from Escherichia coli O157:H7.